Here is a 435-residue protein sequence, read N- to C-terminus: Cyclin-dependent kinase 15 (435 aa).

The Protein kinase domain occupies tyrosine 103–phenylalanine 387. Residues leucine 109–valine 117 and lysine 132 contribute to the ATP site. The active-site Proton acceptor is the aspartate 224.

This sequence belongs to the protein kinase superfamily. CMGC Ser/Thr protein kinase family. CDC2/CDKX subfamily. Requires Mg(2+) as cofactor.

It carries out the reaction L-seryl-[protein] + ATP = O-phospho-L-seryl-[protein] + ADP + H(+). The catalysed reaction is L-threonyl-[protein] + ATP = O-phospho-L-threonyl-[protein] + ADP + H(+). Serine/threonine-protein kinase that acts like an antiapoptotic protein that counters TRAIL/TNFSF10-induced apoptosis by inducing phosphorylation of BIRC5 at 'Thr-34'. The polypeptide is Cyclin-dependent kinase 15 (CDK15) (Homo sapiens (Human)).